The following is a 1352-amino-acid chain: DNA-directed RNA polymerase subunit beta (1352 aa).

It belongs to the RNA polymerase beta chain family. As to quaternary structure, the RNAP catalytic core consists of 2 alpha, 1 beta, 1 beta' and 1 omega subunit. When a sigma factor is associated with the core the holoenzyme is formed, which can initiate transcription.

It catalyses the reaction RNA(n) + a ribonucleoside 5'-triphosphate = RNA(n+1) + diphosphate. In terms of biological role, DNA-dependent RNA polymerase catalyzes the transcription of DNA into RNA using the four ribonucleoside triphosphates as substrates. The chain is DNA-directed RNA polymerase subunit beta from Hydrogenovibrio crunogenus (strain DSM 25203 / XCL-2) (Thiomicrospira crunogena).